A 766-amino-acid chain; its full sequence is MNSSNLNYLDELVKEYLIFRGFTQTNHYFSLEKKGDKLKGFQVDRILEQINIYISSYDINHLVELWNFLDITFFSKIDYNKSNAYNNNNNNNNNYNSNHNSNGSYTSYRNNNNDLQSTIKKLSSSLRKYYVIYAINNNKIDKVKEFFDQYSLELLKDPDWQSWFALPYIRNPQSDPLFEIYFSKTWSEAFSLSLRNFLSTIFKNIPLPKILQFNLERQNRKRLETQVENLLSINEELRSQVDKLEYQNKRDQNNSGSNNNSNNNSNSGFTIGNVSQRKESNVNNFNSGNDLNSSNEREVNSFSRVSKRFEPRSTSSTNIAAMDDDDNKPMIGIGRSRKSISTNSVNSNNNINNNNTSNTNTNTNTNTNTNTNSNSNTNTNTNSNSNTNTSNNNSNSNNNNNGTNTNVTNNNGFQHLNLSGFEMTEIDENGFKKKSSNGLNGSDGIENGELVYNIESQEVCTSHSSAITRCKFLSNGSKIASSSIDGTVRLWNVGFSSRQTTIYCLSEVASLEWENRSKLLLCGTIDSKIKIWNSLTDKAIGDINTSIEFPRVEDIACNPNGNSFATSSINNGRTDGVVYTWNLRTLKTEEKLSSSGAVINSMSFNSTGTLLSTGCVDGTIRIFDIKSGSPIAGWQAHSNEILSVQFSSDENRLYSLGKDGKLYQWNIHSMGKPVKEYDYPGFLVDPHRTTKISFNHNQSSFLVGTNNKFALLYNIDQSSPILQISGHTGPVVTCDWNSSSQSDVIITGSLDKTIRLTKLSKSFNNL.

2 disordered regions span residues 88–108 (NNNN…YTSY) and 249–415 (KRDQ…GFQH). A compositionally biased stretch (low complexity) spans 253-268 (NNSGSNNNSNNNSNSG). The segment covering 269–304 (FTIGNVSQRKESNVNNFNSGNDLNSSNEREVNSFSR) has biased composition (polar residues). Residues 339-412 (SISTNSVNSN…TNTNVTNNNG (74 aa)) show a composition bias toward low complexity. 7 WD repeats span residues 462 to 501 (SHSS…RQTT), 503 to 542 (YCLS…AIGD), 547 to 591 (IEFP…TEEK), 594 to 633 (SSGA…PIAG), 636 to 675 (AHSN…KPVK), 684 to 723 (VDPH…PILQ), and 726 to 766 (GHTG…FNNL).

This sequence belongs to the WD repeat WDR91 family.

The protein localises to the early endosome membrane. It is found in the late endosome membrane. In terms of biological role, functions as a negative regulator of the PI3 kinase/PI3K activity associated with endosomal membranes. By modifying the phosphatidylinositol 3-phosphate/PtdInsP3 content of endosomal membranes may regulate endosome fusion, recycling, sorting and early to late endosome transport. This chain is WD repeat-containing protein 91 homolog (wdr91), found in Dictyostelium discoideum (Social amoeba).